The following is a 136-amino-acid chain: Large ribosomal subunit protein uL16 (136 aa).

It belongs to the universal ribosomal protein uL16 family. As to quaternary structure, part of the 50S ribosomal subunit.

In terms of biological role, binds 23S rRNA and is also seen to make contacts with the A and possibly P site tRNAs. This is Large ribosomal subunit protein uL16 from Ehrlichia canis (strain Jake).